Reading from the N-terminus, the 268-residue chain is Phosphatidylglycerol--prolipoprotein diacylglyceryl transferase (268 aa).

Transmembrane regions (helical) follow at residues Trp-25–Phe-45, Tyr-57–Phe-77, and Val-93–Phe-113. Arg-142 serves as a coordination point for a 1,2-diacyl-sn-glycero-3-phospho-(1'-sn-glycerol). The next 4 membrane-spanning stretches (helical) occupy residues Ile-151–Pro-171, Val-175–Trp-195, Gly-204–Phe-224, and Pro-236–Phe-256.

The protein belongs to the Lgt family.

The protein resides in the cell inner membrane. It carries out the reaction L-cysteinyl-[prolipoprotein] + a 1,2-diacyl-sn-glycero-3-phospho-(1'-sn-glycerol) = an S-1,2-diacyl-sn-glyceryl-L-cysteinyl-[prolipoprotein] + sn-glycerol 1-phosphate + H(+). It functions in the pathway protein modification; lipoprotein biosynthesis (diacylglyceryl transfer). Catalyzes the transfer of the diacylglyceryl group from phosphatidylglycerol to the sulfhydryl group of the N-terminal cysteine of a prolipoprotein, the first step in the formation of mature lipoproteins. This is Phosphatidylglycerol--prolipoprotein diacylglyceryl transferase from Chloroherpeton thalassium (strain ATCC 35110 / GB-78).